A 35-amino-acid chain; its full sequence is Cupiennin-1c (35 aa).

At Glu-35 the chain carries Glutamic acid 1-amide.

In terms of tissue distribution, expressed by the venom gland.

It localises to the secreted. Its function is as follows. Has antimicrobial activity against E.coli, E.faecalis, P.aeruginosa, and S.aureus. This chain is Cupiennin-1c, found in Cupiennius salei (American wandering spider).